We begin with the raw amino-acid sequence, 346 residues long: UPF0065 protein in the TAR-I ttuE-ttuC' intergenic region (346 aa).

The signal sequence occupies residues 1–46; that stretch reads MQASMLDSQWRLTIFSPRRKVKVSQMNSRFIAVLLTATILPWVAQA.

This sequence belongs to the UPF0065 (bug) family.

The protein localises to the periplasm. In Agrobacterium vitis (Rhizobium vitis), this protein is UPF0065 protein in the TAR-I ttuE-ttuC' intergenic region.